The following is a 660-amino-acid chain: Glutenin, high molecular weight subunit 12 (660 aa).

The signal sequence occupies residues 1–21; it reads MAKRLVLFAAVVIALVALTTA. The segment covering 127–136 has biased composition (polar residues); sequence YYPSVTSPRQ. The segment at 127 to 660 is disordered; sequence YYPSVTSPRQ…EGGDALSASQ (534 aa). Low complexity-rich tracts occupy residues 141–166, 187–200, 208–248, and 255–275; these read PGQASPQQPGQGQQPGKWQEPGQGQQ, QGYYPTSLQQPGQG, QGYY…WQQG, and QQLGQGQQPGQWQQSGQGQQG. The segment covering 276–286 has biased composition (polar residues); sequence HYPTSLQQPGQ. Residues 296-365 show a composition bias toward low complexity; that stretch reads QQQPAQGQQG…QQQPGQGQQG (70 aa). A compositionally biased stretch (polar residues) spans 370–384; it reads SLQQPGQQGHYPTSL. 4 stretches are compositionally biased toward low complexity: residues 385–426, 478–514, 522–535, and 551–577; these read QQLG…GQQG, PGQRQQPGQGQHPEQGQQPGQGQQGYYPTSPQQPGQG, QGYYPTSPQQPGQG, and QQTGQAQQLGQGQQIGQVQQPGQGQQG. Gly residues predominate over residues 590–604; the sequence is QQSGQGQQSGQGHQP.

Belongs to the gliadin/glutenin family. Disulfide-bridge linked aggregates.

Glutenins are high-molecular weight seed storage proteins of wheat endosperm. Thought to be responsible for the visco-elastic property of wheat dough. The protein is Glutenin, high molecular weight subunit 12 of Triticum aestivum (Wheat).